A 213-amino-acid polypeptide reads, in one-letter code: Large ribosomal subunit protein uL3 (213 aa).

The interval 124 to 151 is disordered; the sequence is KRHGQSRGPMAHGSRYHRRPGSMGSIAP.

It belongs to the universal ribosomal protein uL3 family. In terms of assembly, part of the 50S ribosomal subunit. Forms a cluster with proteins L14 and L19.

Functionally, one of the primary rRNA binding proteins, it binds directly near the 3'-end of the 23S rRNA, where it nucleates assembly of the 50S subunit. The polypeptide is Large ribosomal subunit protein uL3 (Geobacillus kaustophilus (strain HTA426)).